We begin with the raw amino-acid sequence, 664 residues long: UvrABC system protein B (664 aa).

The Helicase ATP-binding domain maps to 23 to 180; sequence EGLNRGMRFQ…ERLARIGYQR (158 aa). ATP is bound at residue 36 to 43; that stretch reads GVTGSGKT. Positions 89 to 112 match the Beta-hairpin motif; it reads YYDYYQPEAYIPTKDLYIEKNADI. In terms of domain architecture, Helicase C-terminal spans 429–588; the sequence is DLVNEIVKVK…ITPRSVIKPL (160 aa). Positions 622 to 657 constitute a UVR domain; that stretch reads EEYMAVLEEEMYRAASELRYEDAAALRDELFRIREE.

The protein belongs to the UvrB family. As to quaternary structure, forms a heterotetramer with UvrA during the search for lesions. Interacts with UvrC in an incision complex.

It is found in the cytoplasm. The UvrABC repair system catalyzes the recognition and processing of DNA lesions. A damage recognition complex composed of 2 UvrA and 2 UvrB subunits scans DNA for abnormalities. Upon binding of the UvrA(2)B(2) complex to a putative damaged site, the DNA wraps around one UvrB monomer. DNA wrap is dependent on ATP binding by UvrB and probably causes local melting of the DNA helix, facilitating insertion of UvrB beta-hairpin between the DNA strands. Then UvrB probes one DNA strand for the presence of a lesion. If a lesion is found the UvrA subunits dissociate and the UvrB-DNA preincision complex is formed. This complex is subsequently bound by UvrC and the second UvrB is released. If no lesion is found, the DNA wraps around the other UvrB subunit that will check the other stand for damage. This chain is UvrABC system protein B, found in Thermotoga petrophila (strain ATCC BAA-488 / DSM 13995 / JCM 10881 / RKU-1).